Reading from the N-terminus, the 480-residue chain is Glycogen synthase (480 aa).

Residue lysine 15 coordinates ADP-alpha-D-glucose.

This sequence belongs to the glycosyltransferase 1 family. Bacterial/plant glycogen synthase subfamily.

It carries out the reaction [(1-&gt;4)-alpha-D-glucosyl](n) + ADP-alpha-D-glucose = [(1-&gt;4)-alpha-D-glucosyl](n+1) + ADP + H(+). It functions in the pathway glycan biosynthesis; glycogen biosynthesis. Synthesizes alpha-1,4-glucan chains using ADP-glucose. This chain is Glycogen synthase, found in Rhizobium johnstonii (strain DSM 114642 / LMG 32736 / 3841) (Rhizobium leguminosarum bv. viciae).